The chain runs to 110 residues: Nucleoid-associated protein Ent638_0951 (110 aa).

It belongs to the YbaB/EbfC family. In terms of assembly, homodimer.

The protein resides in the cytoplasm. It is found in the nucleoid. Functionally, binds to DNA and alters its conformation. May be involved in regulation of gene expression, nucleoid organization and DNA protection. This Enterobacter sp. (strain 638) protein is Nucleoid-associated protein Ent638_0951.